The chain runs to 1892 residues: Alpha-2-macroglobulin (1892 aa).

A signal peptide spans 1–23; that stretch reads MKNIFRKFVFTIFVCLINLQLIA. A cross-link (isoglutamyl cysteine thioester (Cys-Gln)) is located at residues 1441–1444; sequence CTEQ.

The protein belongs to the protease inhibitor I39 (alpha-2-macroglobulin) family. Bacterial alpha-2-macroglobulin subfamily.

In terms of biological role, protects the bacterial cell from host peptidases. In Rickettsia conorii (strain ATCC VR-613 / Malish 7), this protein is Alpha-2-macroglobulin.